A 628-amino-acid chain; its full sequence is 1,4-alpha-glucan branching enzyme GlgB (628 aa).

The active-site Nucleophile is the Asp-304. Catalysis depends on Glu-355, which acts as the Proton donor.

This sequence belongs to the glycosyl hydrolase 13 family. GlgB subfamily. In terms of assembly, monomer.

It carries out the reaction Transfers a segment of a (1-&gt;4)-alpha-D-glucan chain to a primary hydroxy group in a similar glucan chain.. The protein operates within glycan biosynthesis; glycogen biosynthesis. Catalyzes the formation of the alpha-1,6-glucosidic linkages in glycogen by scission of a 1,4-alpha-linked oligosaccharide from growing alpha-1,4-glucan chains and the subsequent attachment of the oligosaccharide to the alpha-1,6 position. This Streptococcus mutans serotype c (strain ATCC 700610 / UA159) protein is 1,4-alpha-glucan branching enzyme GlgB.